The primary structure comprises 1944 residues: Anaphase-promoting complex subunit 1 (1944 aa).

Residues Ser-51 and Ser-60 each carry the phosphoserine modification. Thr-291 bears the Phosphothreonine mark. Residues 312-343 form a disordered region; sequence ESPVASPFQNYSSIHSQSRSTSSPSLHSRSPS. Residues Ser-313, Ser-341, Ser-343, Ser-355, Ser-362, Ser-373, and Ser-377 each carry the phosphoserine modification. The segment covering 323–343 has biased composition (low complexity); it reads SSIHSQSRSTSSPSLHSRSPS. The interval 370–395 is disordered; sequence NLSSHSQSPKRHSISHSPSGSFNDSF. Residues 384–393 are compositionally biased toward polar residues; it reads SHSPSGSFND. At Thr-537 the chain carries Phosphothreonine. Residues Ser-547 and Ser-555 each carry the phosphoserine modification. Tyr-571 carries the post-translational modification Phosphotyrosine. A phosphoserine mark is found at Ser-680, Ser-686, and Ser-688. Residues 991–1014 form a disordered region; that stretch reads NLPRGKSVLSSEVSSGTEAEEEDD. Over residues 998 to 1007 the composition is skewed to polar residues; that stretch reads VLSSEVSSGT. 4 PC repeats span residues 1297–1325, 1366–1404, 1467–1501, and 1520–1552; these read AAGL…PEQL, GATL…PEFL, GACL…YLSA, and LLSL…EMNY.

Belongs to the APC1 family. In terms of assembly, the mammalian APC/C is composed at least of 14 distinct subunits ANAPC1, ANAPC2, CDC27/APC3, ANAPC4, ANAPC5, CDC16/APC6, ANAPC7, CDC23/APC8, ANAPC10, ANAPC11, CDC26/APC12, ANAPC13, ANAPC15 and ANAPC16 that assemble into a complex of at least 19 chains with a combined molecular mass of around 1.2 MDa; APC/C interacts with FZR1 and FBXO5. Phosphorylated. Phosphorylation on Ser-355 occurs specifically during mitosis. In terms of tissue distribution, abundantly expressed in proliferating fibroblasts, juvenile testis, adult brain and epididymis.

The protein operates within protein modification; protein ubiquitination. Component of the anaphase promoting complex/cyclosome (APC/C), a cell cycle-regulated E3 ubiquitin ligase that controls progression through mitosis and the G1 phase of the cell cycle. The APC/C complex acts by mediating ubiquitination and subsequent degradation of target proteins: it mainly mediates the formation of 'Lys-11'-linked polyubiquitin chains and, to a lower extent, the formation of 'Lys-48'- and 'Lys-63'-linked polyubiquitin chains. The APC/C complex catalyzes assembly of branched 'Lys-11'-/'Lys-48'-linked branched ubiquitin chains on target proteins. The protein is Anaphase-promoting complex subunit 1 (Anapc1) of Mus musculus (Mouse).